Reading from the N-terminus, the 760-residue chain is BMP/retinoic acid-inducible neural-specific protein 1 (760 aa).

The N-terminal stretch at 1-16 (MNWRFVELLYFLFVWG) is a signal peptide. In terms of domain architecture, MACPF spans 68–251 (RYKIYREFAR…FVQSALSYIM (184 aa)). Asparagine 156, asparagine 433, asparagine 443, asparagine 553, asparagine 599, asparagine 630, and asparagine 676 each carry an N-linked (GlcNAc...) asparagine glycan.

It belongs to the BRINP family. As to expression, expressed in brain. Expressed in GABAergic neurons of the pre-frontal cortex. Weakly expressed in embryonic stem (ES) cells and in ES-derived neural stem cells (NSCs).

Its subcellular location is the cytoplasm. Functionally, plays a role in neurogenesis, brain development, and the functioning of GABAergic neurons. May suppress cell cycle progression in postmitotic neurons by inhibiting G1/S transition. The protein is BMP/retinoic acid-inducible neural-specific protein 1 (Brinp1) of Mus musculus (Mouse).